Consider the following 338-residue polypeptide: Probable family 20 transposase (338 aa).

This sequence belongs to the transposase 20 family.

Its function is as follows. Required for the transposition of an insertion element. This Pseudomonas aeruginosa (strain ATCC 15692 / DSM 22644 / CIP 104116 / JCM 14847 / LMG 12228 / 1C / PRS 101 / PAO1) protein is Probable family 20 transposase.